The chain runs to 262 residues: Hydroxyethylthiazole kinase (262 aa).

Met44 contributes to the substrate binding site. ATP-binding residues include Arg118 and Thr166. Gly193 provides a ligand contact to substrate.

It belongs to the Thz kinase family. It depends on Mg(2+) as a cofactor.

It catalyses the reaction 5-(2-hydroxyethyl)-4-methylthiazole + ATP = 4-methyl-5-(2-phosphooxyethyl)-thiazole + ADP + H(+). The protein operates within cofactor biosynthesis; thiamine diphosphate biosynthesis; 4-methyl-5-(2-phosphoethyl)-thiazole from 5-(2-hydroxyethyl)-4-methylthiazole: step 1/1. Functionally, catalyzes the phosphorylation of the hydroxyl group of 4-methyl-5-beta-hydroxyethylthiazole (THZ). This chain is Hydroxyethylthiazole kinase, found in Chlamydia caviae (strain ATCC VR-813 / DSM 19441 / 03DC25 / GPIC) (Chlamydophila caviae).